A 104-amino-acid polypeptide reads, in one-letter code: Ribonuclease P protein component 4 (104 aa).

Zn(2+)-binding residues include cysteine 57, cysteine 60, cysteine 83, and cysteine 86.

The protein belongs to the eukaryotic/archaeal RNase P protein component 4 family. In terms of assembly, consists of a catalytic RNA component and at least 4-5 protein subunits. Zn(2+) is required as a cofactor.

Its subcellular location is the cytoplasm. The catalysed reaction is Endonucleolytic cleavage of RNA, removing 5'-extranucleotides from tRNA precursor.. Functionally, part of ribonuclease P, a protein complex that generates mature tRNA molecules by cleaving their 5'-ends. The polypeptide is Ribonuclease P protein component 4 (Saccharolobus islandicus (strain L.S.2.15 / Lassen #1) (Sulfolobus islandicus)).